Reading from the N-terminus, the 110-residue chain is Small ribosomal subunit protein bS16 (110 aa).

Residues 81–104 (VRPAEVLGKQKQEKERSAKKKDAT) are compositionally biased toward basic and acidic residues. The segment at 81-110 (VRPAEVLGKQKQEKERSAKKKDATASETSE) is disordered.

This sequence belongs to the bacterial ribosomal protein bS16 family.

This is Small ribosomal subunit protein bS16 from Prochlorococcus marinus (strain NATL1A).